We begin with the raw amino-acid sequence, 84 residues long: MSILSFLLGEKKKSASVAKERLQLIIAHERVGGRPPADYLPALQKELVAVISKYVRISNDDIRVSLERQDDLEVLEVKIEIPQA.

Belongs to the MinE family.

Prevents the cell division inhibition by proteins MinC and MinD at internal division sites while permitting inhibition at polar sites. This ensures cell division at the proper site by restricting the formation of a division septum at the midpoint of the long axis of the cell. In Burkholderia ambifaria (strain MC40-6), this protein is Cell division topological specificity factor.